The chain runs to 229 residues: Large ribosomal subunit protein uL1 (229 aa).

It belongs to the universal ribosomal protein uL1 family. As to quaternary structure, part of the 50S ribosomal subunit.

Functionally, binds directly to 23S rRNA. The L1 stalk is quite mobile in the ribosome, and is involved in E site tRNA release. In terms of biological role, protein L1 is also a translational repressor protein, it controls the translation of the L11 operon by binding to its mRNA. In Streptococcus suis (strain 98HAH33), this protein is Large ribosomal subunit protein uL1.